The following is a 361-amino-acid chain: Chorismate synthase (361 aa).

R48 and R54 together coordinate NADP(+). FMN contacts are provided by residues 125 to 127 (RSS), 238 to 239 (NA), G278, 293 to 297 (KPTSS), and R319.

Belongs to the chorismate synthase family. Homotetramer. FMNH2 serves as cofactor.

The catalysed reaction is 5-O-(1-carboxyvinyl)-3-phosphoshikimate = chorismate + phosphate. The protein operates within metabolic intermediate biosynthesis; chorismate biosynthesis; chorismate from D-erythrose 4-phosphate and phosphoenolpyruvate: step 7/7. Its function is as follows. Catalyzes the anti-1,4-elimination of the C-3 phosphate and the C-6 proR hydrogen from 5-enolpyruvylshikimate-3-phosphate (EPSP) to yield chorismate, which is the branch point compound that serves as the starting substrate for the three terminal pathways of aromatic amino acid biosynthesis. This reaction introduces a second double bond into the aromatic ring system. This is Chorismate synthase from Pectobacterium atrosepticum (strain SCRI 1043 / ATCC BAA-672) (Erwinia carotovora subsp. atroseptica).